Consider the following 192-residue polypeptide: Superoxide dismutase [Fe] (192 aa).

Residues His-27, His-74, Asp-157, and His-161 each coordinate Fe cation.

This sequence belongs to the iron/manganese superoxide dismutase family. Homodimer. Fe cation serves as cofactor.

It catalyses the reaction 2 superoxide + 2 H(+) = H2O2 + O2. Destroys superoxide anion radicals which are normally produced within the cells and which are toxic to biological systems. This is Superoxide dismutase [Fe] (sodB) from Legionella pneumophila subsp. pneumophila (strain Philadelphia 1 / ATCC 33152 / DSM 7513).